The sequence spans 330 residues: tRNA U34 carboxymethyltransferase (330 aa).

Residues Lys91, Trp105, Lys110, Gly130, 152 to 154 (DPS), 181 to 182 (IE), Met196, Tyr200, and Arg315 contribute to the carboxy-S-adenosyl-L-methionine site.

The protein belongs to the class I-like SAM-binding methyltransferase superfamily. CmoB family. Homotetramer.

It carries out the reaction carboxy-S-adenosyl-L-methionine + 5-hydroxyuridine(34) in tRNA = 5-carboxymethoxyuridine(34) in tRNA + S-adenosyl-L-homocysteine + H(+). In terms of biological role, catalyzes carboxymethyl transfer from carboxy-S-adenosyl-L-methionine (Cx-SAM) to 5-hydroxyuridine (ho5U) to form 5-carboxymethoxyuridine (cmo5U) at position 34 in tRNAs. The polypeptide is tRNA U34 carboxymethyltransferase (Shewanella halifaxensis (strain HAW-EB4)).